The primary structure comprises 451 residues: UPF0210 protein NMC1568 (451 aa).

Belongs to the UPF0210 family. In terms of assembly, homodimer.

This chain is UPF0210 protein NMC1568, found in Neisseria meningitidis serogroup C / serotype 2a (strain ATCC 700532 / DSM 15464 / FAM18).